A 77-amino-acid polypeptide reads, in one-letter code: Mu-conotoxin BuIIIA (77 aa).

The N-terminal stretch at 1–22 (MMSKLGVLLTICLLLFPLFALP) is a signal peptide. Residues 23 to 51 (QDGDQPADRPAERMQDDISSEQNSLLEKR) constitute a propeptide that is removed on maturation. A disordered region spans residues 26–46 (DQPADRPAERMQDDISSEQNS). Residues 28 to 38 (PADRPAERMQD) show a composition bias toward basic and acidic residues. Disulfide bonds link Cys-56-Cys-67, Cys-57-Cys-73, and Cys-63-Cys-74. Cys-74 is subject to Cysteine amide.

It belongs to the conotoxin M superfamily. Expressed by the venom duct.

The protein localises to the secreted. In terms of biological role, mu-conotoxins block voltage-gated sodium channels (Nav). This synthetic toxin potently blocks rNav1.2/SCN2A, and rNav1.4/SCN4A. It also moderately blocks rNav1.1/SCN1A, rNav1.3/SCN3A, rNav1.5/SCN5A, and mNav1.6/SCN8A. The inhibition is reversible. The polypeptide is Mu-conotoxin BuIIIA (Conus bullatus (Bubble cone)).